A 2161-amino-acid polypeptide reads, in one-letter code: DNA polymerase epsilon catalytic subunit A (2161 aa).

3 consecutive short sequence motifs (nuclear localization signal) follow at residues 5 to 12 (NRRRDRKD), 1137 to 1144 (HKKVREKD), and 1239 to 1246 (LKKRKWKV). Zn(2+) is bound by residues C2038, C2041, C2063, and C2068. The CysA-type zinc finger occupies 2038-2068 (CSNCDAYRDLDICRDPALLTEKEWSCADTQC). C2099, C2102, C2114, and C2116 together coordinate [4Fe-4S] cluster. The CysB motif motif lies at 2099 to 2116 (CIRCNQVKAAHLTEQCEC). A Nuclear localization signal 4 motif is present at residues 2130–2137 (SKRMEIFM).

The protein belongs to the DNA polymerase type-B family. As to quaternary structure, heterotetramer. Subunit of the DNA polymerase II. Interacts (via C-terminus) with DPB2. Interacts with LHP1/TFL2. [4Fe-4S] cluster is required as a cofactor. Mostly expressed at low levels in inflorescence (floral meristem and flowers until anthesis), and, to a lower extent, in roots, seeds and leaves.

The protein localises to the nucleus. It carries out the reaction DNA(n) + a 2'-deoxyribonucleoside 5'-triphosphate = DNA(n+1) + diphosphate. DNA polymerase II, which participates in chromosomal DNA replication. Required for the timing and determination of cell fate during plant embryogenesis and root pole development, by promoting cell cycle and cell type patterning. Necessary for proper shoot (SAM) and root apical meristem (RAM) functions. Involved in maintaining epigenetic states, controlling hypersensitive response (HR), and mediating abscisic acid (ABA) signaling. Required for flowering repression through a mechanism involving epigenetic gene silencing. May participate in processes involved in chromatin-mediated cellular memory. This chain is DNA polymerase epsilon catalytic subunit A (POL2A), found in Arabidopsis thaliana (Mouse-ear cress).